The primary structure comprises 245 residues: DNA repair protein RecO (245 aa).

Belongs to the RecO family.

Involved in DNA repair and RecF pathway recombination. This is DNA repair protein RecO from Klebsiella pneumoniae subsp. pneumoniae (strain ATCC 700721 / MGH 78578).